The sequence spans 654 residues: Glycogen debranching enzyme (654 aa).

The Nucleophile role is filled by Asp336. Glu371 serves as the catalytic Proton donor. Residues 459 to 484 are disordered; sequence EANGEENRDGTNSNYSDNHGKEGLGG.

It belongs to the glycosyl hydrolase 13 family.

It carries out the reaction Hydrolysis of (1-&gt;6)-alpha-D-glucosidic linkages to branches with degrees of polymerization of three or four glucose residues in limit dextrin.. The protein operates within glycan degradation; glycogen degradation. Functionally, removes maltotriose and maltotetraose chains that are attached by 1,6-alpha-linkage to the limit dextrin main chain, generating a debranched limit dextrin. In Salmonella typhi, this protein is Glycogen debranching enzyme.